The primary structure comprises 1064 residues: Lysine-specific demethylase 4A (1064 aa).

An N-acetylalanine modification is found at Ala-2. The JmjN domain maps to 14–56; sequence IMTFYPTMEEFRNFSRYIAYIESQGAHRAGLAKVVPPKEWKPR. A 2-oxoglutarate-binding site is contributed by Tyr-132. The region spanning 142–308 is the JmjC domain; that stretch reads EQHVDEWNIG…YGKQAVLCSC (167 aa). Fe cation contacts are provided by His-188 and Glu-190. Asn-198 and Lys-206 together coordinate 2-oxoglutarate. Zn(2+) is bound by residues Cys-234 and His-240. Lys-241 contacts 2-oxoglutarate. His-276 provides a ligand contact to Fe cation. 2 residues coordinate Zn(2+): Cys-306 and Cys-308. Disordered stretches follow at residues 354-384, 434-489, 502-537, 549-573, and 590-643; these read LKDS…EEGD, LAPV…LDLS, SGSK…QGQE, RGDG…SISE, and NKKT…LSQL. Residues 368–382 are compositionally biased toward acidic residues; the sequence is ECPEEDVEAADQGEE. Residues 460–472 are compositionally biased toward basic and acidic residues; the sequence is TEVKFEELKNVKL. Positions 473–482 are enriched in acidic residues; it reads EEEDEEDEPE. The span at 509–525 shows a compositional bias: low complexity; it reads SSSLGSTSSQDSVSSDS. The residue at position 523 (Ser-523) is a Phosphoserine. Polar residues predominate over residues 528–537; that stretch reads AESVSCQGQE. Basic residues predominate over residues 593–608; the sequence is TKGRRQPLSKLPRHHP. The segment at 597–638 is interaction with NCOR1; that stretch reads RQPLSKLPRHHPLVLQECGSDDETSEQLTPEEEAEETEAWAK. Residues 615–634 show a composition bias toward acidic residues; the sequence is GSDDETSEQLTPEEEAEETE. Residues 709–767 form a PHD-type 1 zinc finger; that stretch reads MCFTTTGCSTDINLSTPYLEEDGTSMLVSCKKCSVRVHASCYGVPPAKASEEWMCSRCS. Residues 772–805 form a C2HC pre-PHD-type zinc finger; that stretch reads EEDCCLCSLRGGALQRANDDRWVHVSCAVAILEA. The PHD-type 2 zinc-finger motif lies at 828 to 885; it reads LKCVFCKKRRKRNAGCCVQCSHGRCPTAFHVSCAQAAGVMMQPDDWPFVVFITCFRHK. Tudor domains follow at residues 897-954 and 955-1011; these read LSIT…CLQL and GPPA…EELP.

This sequence belongs to the JHDM3 histone demethylase family. Interacts with histone deacetylase proteins HDAC1, HDAC2 and HDAC3. Interacts with RB and NCOR1. Interacts with VRK1. Requires Fe(2+) as cofactor. In terms of processing, ubiquitinated by RNF8 and RNF168, leading to its degradation. Degradation promotes accessibility of H4K20me2 mark for DNA repair protein TP53BP1, which is then recruited. Also ubiquitinated by the SCF(FBXO22) complex; leading to proteasomal degradation. Widely expressed.

The protein resides in the nucleus. The enzyme catalyses N(6),N(6),N(6)-trimethyl-L-lysyl(9)-[histone H3] + 2 2-oxoglutarate + 2 O2 = N(6)-methyl-L-lysyl(9)-[histone H3] + 2 formaldehyde + 2 succinate + 2 CO2. It catalyses the reaction N(6),N(6),N(6)-trimethyl-L-lysyl(36)-[histone H3] + 2 2-oxoglutarate + 2 O2 = N(6)-methyl-L-lysyl(36)-[histone H3] + 2 formaldehyde + 2 succinate + 2 CO2. Functionally, histone demethylase that specifically demethylates 'Lys-9' and 'Lys-36' residues of histone H3, thereby playing a central role in histone code. Does not demethylate histone H3 'Lys-4', H3 'Lys-27' nor H4 'Lys-20'. Demethylates trimethylated H3 'Lys-9' and H3 'Lys-36' residue, while it has no activity on mono- and dimethylated residues. Demethylation of Lys residue generates formaldehyde and succinate. Participates in transcriptional repression of ASCL2 and E2F-responsive promoters via the recruitment of histone deacetylases and NCOR1, respectively. The protein is Lysine-specific demethylase 4A (Kdm4a) of Mus musculus (Mouse).